We begin with the raw amino-acid sequence, 147 residues long: Fibromodulin (147 aa).

6 LRR repeats span residues 1–15 (LDHNNLTRMPGPLPR), 16–37 (SLRELHLDHNQISRVPNNALEG), 40–61 (NLTALYLQHNEIQEVGSSMRGL), 63–84 (SLILLDLSYNHLRKVPDGLPSA), 85–105 (LEQLYLEHNNVYSVPDSYFRG), and 108–128 (KLLYVRLSHNSLTNNGLASNT). Asn5 is a glycosylation site (N-linked (GlcNAc...) (keratan sulfate) asparagine). Asn40 carries an N-linked (GlcNAc...) (keratan sulfate) asparagine glycan. Asn130 carries an N-linked (GlcNAc...) (keratan sulfate) asparagine glycan. The stretch at 133–147 (SLLELDLSYNQLQKI) is one LRR 7 repeat.

The protein belongs to the small leucine-rich proteoglycan (SLRP) family. SLRP class II subfamily. Binds to type I and type II collagen. Binds keratan sulfate chains.

It is found in the secreted. The protein resides in the extracellular space. Its subcellular location is the extracellular matrix. Affects the rate of fibrils formation. May have a primary role in collagen fibrillogenesis. The protein is Fibromodulin (FMOD) of Sus scrofa (Pig).